Reading from the N-terminus, the 575-residue chain is Manganese transporter SMF1 (575 aa).

At 1 to 70 the chain is on the extracellular side; the sequence is MVNVGPSHAA…TYVSKRQVMR (70 aa). Ser24 carries the post-translational modification Phosphoserine. Residues Lys33 and Lys34 each participate in a glycyl lysine isopeptide (Lys-Gly) (interchain with G-Cter in ubiquitin) cross-link. The helical transmembrane segment at 71-91 threads the bilayer; the sequence is DIFAKYLKFIGPGLMVSVAYI. Over 92 to 108 the chain is Cytoplasmic; it reads DPGNYSTAVDAGASNQF. Residues 109–129 form a helical membrane-spanning segment; it reads SLLCIILLSNFIAIFLQCLCI. Residues 130–156 are Extracellular-facing; the sequence is KLGSVTGLDLSRACREYLPRWLNWTLY. The chain crosses the membrane as a helical span at residues 157-177; it reads FFAECAVIATDIAEVIGTAIA. At 178 to 179 the chain is on the cytoplasmic side; it reads LN. The helical transmembrane segment at 180-200 threads the bilayer; sequence ILIKVPLPAGVAITVVDVFLI. Over 201 to 218 the chain is Extracellular; that stretch reads MFTYKPGASSIRFIRIFE. Residues 219–239 traverse the membrane as a helical segment; that stretch reads CFVAVLVVGVCICFAIELAYI. Residues 240-266 lie on the Cytoplasmic side of the membrane; that stretch reads PKSTSVKQVFRGFVPSAQMFDHNGIYT. A helical transmembrane segment spans residues 267–287; that stretch reads AISILGATVMPHSLFLGSALV. At 288-344 the chain is on the extracellular side; it reads QPRLLDYDVKHGNYTVSEEQDKVKKSKSTEEIMEEKYFNYRPTNAAIKYCMKYSMVE. The helical transmembrane segment at 345–365 threads the bilayer; it reads LSITLFTLALFVNCAILVVAG. The Cytoplasmic segment spans residues 366–396; the sequence is STLYNSPEADGADLFTIHELLSRNLAPAAGT. Residues 397-417 traverse the membrane as a helical segment; sequence IFMLALLLSGQSAGVVCTMSG. The Extracellular portion of the chain corresponds to 418–463; that stretch reads QIVSEGHINWKLQPWQRRLATRCISIIPCLVISICIGREALSKALN. A helical transmembrane segment spans residues 464–484; it reads ASQVVLSIVLPFLVAPLIFFT. The Cytoplasmic portion of the chain corresponds to 485-543; it reads CKKSIMKTEITVDHTEEDSHNHQNNNDRSAGSVIEQDGSSGMEIENGKDVKIVYMANNW. Residues 498 to 517 form a disordered region; sequence HTEEDSHNHQNNNDRSAGSV. Residues 544-564 traverse the membrane as a helical segment; sequence IITVIAIIVWLFLSLLNVYAI. The Extracellular portion of the chain corresponds to 565 to 575; it reads VQLGMSHGDIS.

It belongs to the NRAMP family.

It localises to the cell membrane. The enzyme catalyses Mn(2+)(in) = Mn(2+)(out). High-affinity manganese transporter involved in manganese uptake from the extracellular environment. Also contributes to cellular accumulation of other divalent metal ions such as cadmium, cobalt, copper, iron and nickel. This chain is Manganese transporter SMF1 (SMF1), found in Saccharomyces cerevisiae (strain ATCC 204508 / S288c) (Baker's yeast).